A 215-amino-acid polypeptide reads, in one-letter code: UPF0502 protein Shal_1801 (215 aa).

This sequence belongs to the UPF0502 family.

In Shewanella halifaxensis (strain HAW-EB4), this protein is UPF0502 protein Shal_1801.